The following is a 231-amino-acid chain: Cytochrome c oxidase assembly factor 7 (231 aa).

The residue at position 2 (Ala-2) is an N-acetylalanine. Sel1-like repeat units follow at residues 34–66 (PEGCYRLVDYLEGIQKNFDEAAKVLKFNCEKYG), 68–104 (GDSCYKLGAYYVTGKGGLTQDLKAASSCFLMACEKPG), 108–146 (VESCHNVGLLAHDGQVNEDGQPDLGKARDYYSRACDGGY), 147–183 (AASCFNLSAMFLQGAPGFPKDMGLACKYSMKACDLGH), and 184–219 (VWACANASRMYKLGDGVDKDEAKAEVLKNRARQLHK).

It belongs to the hcp beta-lactamase family. Interacts with CHCHD4/MIA40 through transient intermolecular disulfide bonds.

It localises to the mitochondrion intermembrane space. In terms of biological role, required for assembly of mitochondrial respiratory chain complex I and complex IV. The chain is Cytochrome c oxidase assembly factor 7 (Coa7) from Mus musculus (Mouse).